The primary structure comprises 155 residues: MSRRGTAEEKTAKSDPIYRNRLVNMLVNRILKHGKKSLAYQILYRAVKKIQQKTETNPLSVLRQAIRGVTPDIAVKARRVGGSTHQVPIEIGSTQGKALAIRWLLAASRKRPGRNMAFKLSSELVDAAKGSGDAIRKKEETHRMAEANRAFAHFR.

Belongs to the universal ribosomal protein uS7 family. In terms of assembly, part of the 30S ribosomal subunit.

The protein localises to the plastid. The protein resides in the chloroplast. In terms of biological role, one of the primary rRNA binding proteins, it binds directly to 16S rRNA where it nucleates assembly of the head domain of the 30S subunit. The sequence is that of Small ribosomal subunit protein uS7c (rps7) from Cornus mas (Cornelian cherry dogwood).